The chain runs to 23 residues: Septenin 2a (23 aa).

Expressed in skin glands.

Its subcellular location is the secreted. Its function is as follows. May act as an antimicrobial peptide. The polypeptide is Septenin 2a (Osteopilus septentrionalis (Cuban treefrog)).